Consider the following 450-residue polypeptide: MSLLQFSGLFVVWLLCTLFIATLTWFEFRRVRFNFNVFFSLLFLLTFFFGFPLTSVLVFRFDVGVAPPEILLQALLSAGCFYAVYYVTYKTRLRKRVADAPRRPLFTMNRVETNLTWVILMGIALVSVGIFFMHNGFLLFRLNSYSQIFSSEVSGVALKRFFYFFIPAMLVVYFLRQDSKAWLFFLVSTVAFGLLTYMIVGGTRANIIIAFAIFLFIGIIRGWISLWMLAAAGVLGIVGMFWLALKRYGMNVSGDEAFYTFLYLTRDTFSPWENLALLLQNYDNIDFQGLAPIVRDFYVFIPSWLWPGRPSMVLNSANYFTWEVLNNHSGLAISPTLIGSLVVMGGALFIPLGAIVVGLIIKWFDWLYELGNRETNRYKAAILHSFCFGAIFNMIVLAREGLDSFVSRVVFFIVVFGACLMIAKLLYWLFESAGLIHKRTKSSLRTQVEG.

The next 11 helical transmembrane spans lie at 6 to 26, 37 to 57, 63 to 83, 118 to 138, 155 to 175, 181 to 201, 207 to 227, 228 to 248, 341 to 361, 378 to 398, and 410 to 430; these read FSGL…LTWF, VFFS…TSVL, VGVA…CFYA, VILM…NGFL, GVAL…VYFL, AWLF…MIVG, IIIA…ISLW, MLAA…LKRY, LVVM…GLII, YKAA…IVLA, and VFFI…YWLF.

It belongs to the WzyE family. In terms of assembly, probably part of a complex composed of WzxE, WzyE and WzzE.

It is found in the cell inner membrane. Its pathway is bacterial outer membrane biogenesis; enterobacterial common antigen biosynthesis. Its function is as follows. Probably involved in the polymerization of enterobacterial common antigen (ECA) trisaccharide repeat units. This Escherichia coli O127:H6 (strain E2348/69 / EPEC) protein is Probable ECA polymerase.